Reading from the N-terminus, the 428-residue chain is C4-dicarboxylate transport protein (428 aa).

The next 8 helical transmembrane spans lie at 8–28 (SLYF…HFYP), 44–64 (LIKM…IAGM), 76–96 (VALL…LIIV), 142–162 (IGAF…LFGF), 184–204 (VIFG…FGAM), 222–242 (LIIC…GSIA), 326–346 (IVHQ…AAGV), and 352–372 (IVLA…LALI).

Belongs to the dicarboxylate/amino acid:cation symporter (DAACS) (TC 2.A.23) family.

It is found in the cell inner membrane. Its function is as follows. Responsible for the transport of dicarboxylates such as succinate, fumarate, and malate from the periplasm across the membrane. This Shigella dysenteriae serotype 1 (strain Sd197) protein is C4-dicarboxylate transport protein.